The chain runs to 233 residues: Large ribosomal subunit protein uL1 (233 aa).

Belongs to the universal ribosomal protein uL1 family. As to quaternary structure, part of the 50S ribosomal subunit.

In terms of biological role, binds directly to 23S rRNA. The L1 stalk is quite mobile in the ribosome, and is involved in E site tRNA release. Protein L1 is also a translational repressor protein, it controls the translation of the L11 operon by binding to its mRNA. In Campylobacter curvus (strain 525.92), this protein is Large ribosomal subunit protein uL1.